Reading from the N-terminus, the 574-residue chain is Sorting nexin-33 (574 aa).

The 61-residue stretch at 1–61 (MALKGRALYD…PASYVEIVRS (61 aa)) folds into the SH3 domain. Residues 68–119 (ADYSSSPAGSPGAQVSLYNSPSVASPARSGGGSGFLSNQGSFEEDDDDDWDD) are disordered. 2 positions are modified to phosphoserine: S77 and S92. The span at 109-119 (FEEDDDDDWDD) shows a compositional bias: acidic residues. The 111-residue stretch at 230-340 (FACSVEDPTK…HFLSCLDDKQ (111 aa)) folds into the PX domain. The BAR domain maps to 371 to 574 (LQDVEDRVDT…EKTLRMYDNL (204 aa)).

The protein belongs to the sorting nexin family. Homodimer (via BAR domain). Interacts with ADAM15. Interacts with FASLG. Interacts (via SH3 domain) with DNM1 and DNM2. Interacts with WASL. Interacts with FCHSD1 (via the F-BAR domain). Post-translationally, phosphorylated. In terms of tissue distribution, detected in heart and pancreas.

It is found in the cytoplasm. It localises to the cytosol. Its subcellular location is the membrane. The protein localises to the cytoplasmic vesicle membrane. Functionally, plays a role in the reorganization of the cytoskeleton, endocytosis and cellular vesicle trafficking via its interactions with membranes, WASL, DNM1 and DNM2. Acts both during interphase and at the end of mitotic cell divisions. Required for efficient progress through mitosis and cytokinesis. Required for normal formation of the cleavage furrow at the end of mitosis. Modulates endocytosis of cell-surface proteins, such as APP and PRNP; this then modulates the secretion of APP and PRNP peptides. Promotes membrane tubulation (in vitro). May promote the formation of macropinosomes. This Homo sapiens (Human) protein is Sorting nexin-33 (SNX33).